The following is a 127-amino-acid chain: Phospholipase A2 homolog otoconin-22 (127 aa).

Asparagine 20 is a glycosylation site (N-linked (GlcNAc...) asparagine). Intrachain disulfides connect cysteine 26–cysteine 120, cysteine 28–cysteine 44, cysteine 43–cysteine 99, cysteine 49–cysteine 127, cysteine 50–cysteine 92, cysteine 59–cysteine 85, and cysteine 78–cysteine 90. The N-linked (GlcNAc...) asparagine glycan is linked to asparagine 113.

This sequence belongs to the phospholipase A2 family. As to quaternary structure, monomer. As to expression, otoconial membrane in the maculae of the saccule and utricle. Otoconia are composites of proteins and inorganic crystals formed in the peripheral portion of the vestibular system of vertebrates. The otoconial membranes contain small crystals of calcium carbonate known as otoliths (ear stones) if there is a single deposit or as otoconia (ear dust) if there are many. Each mineral polymorph of otoconia has a protein unique to that polymorph.

The protein resides in the secreted. Major protein of the aragonitic otoconia. It is unlikely that this protein has phospholipase A2 activity. This chain is Phospholipase A2 homolog otoconin-22, found in Xenopus laevis (African clawed frog).